Consider the following 333-residue polypeptide: Tetraacyldisaccharide 4'-kinase (333 aa).

Ser55–Thr62 is an ATP binding site.

The protein belongs to the LpxK family.

The catalysed reaction is a lipid A disaccharide + ATP = a lipid IVA + ADP + H(+). It functions in the pathway glycolipid biosynthesis; lipid IV(A) biosynthesis; lipid IV(A) from (3R)-3-hydroxytetradecanoyl-[acyl-carrier-protein] and UDP-N-acetyl-alpha-D-glucosamine: step 6/6. Transfers the gamma-phosphate of ATP to the 4'-position of a tetraacyldisaccharide 1-phosphate intermediate (termed DS-1-P) to form tetraacyldisaccharide 1,4'-bis-phosphate (lipid IVA). The chain is Tetraacyldisaccharide 4'-kinase from Aeromonas hydrophila subsp. hydrophila (strain ATCC 7966 / DSM 30187 / BCRC 13018 / CCUG 14551 / JCM 1027 / KCTC 2358 / NCIMB 9240 / NCTC 8049).